A 1202-amino-acid chain; its full sequence is Putative late blight resistance protein homolog R1B-8 (1202 aa).

Coiled-coil stretches lie at residues Arg-345–Gln-368 and Leu-437–Asn-459. One can recognise an NB-ARC domain in the interval Ile-426–Glu-741. Gly-471–Thr-478 lines the ATP pocket. LRR repeat units lie at residues Phe-865–Leu-889, Leu-908–Met-936, Pro-1011–Pro-1036, Tyr-1040–His-1059, Leu-1060–Gly-1084, Phe-1086–Asn-1111, and Ser-1128–Ser-1151.

The protein belongs to the disease resistance NB-LRR family.

The protein resides in the cytoplasm. Its subcellular location is the membrane. Functionally, confers resistance to late blight (Phytophthora infestans) races carrying the avirulence gene Avr1. Resistance proteins guard the plant against pathogens that contain an appropriate avirulence protein via an indirect interaction with this avirulence protein. That triggers a defense system including the hypersensitive response, which restricts the pathogen growth. The polypeptide is Putative late blight resistance protein homolog R1B-8 (R1B-8) (Solanum demissum (Wild potato)).